A 178-amino-acid chain; its full sequence is ATP synthase subunit delta (178 aa).

The protein belongs to the ATPase delta chain family. F-type ATPases have 2 components, F(1) - the catalytic core - and F(0) - the membrane proton channel. F(1) has five subunits: alpha(3), beta(3), gamma(1), delta(1), epsilon(1). F(0) has three main subunits: a(1), b(2) and c(10-14). The alpha and beta chains form an alternating ring which encloses part of the gamma chain. F(1) is attached to F(0) by a central stalk formed by the gamma and epsilon chains, while a peripheral stalk is formed by the delta and b chains.

The protein resides in the cell membrane. Its function is as follows. F(1)F(0) ATP synthase produces ATP from ADP in the presence of a proton or sodium gradient. F-type ATPases consist of two structural domains, F(1) containing the extramembraneous catalytic core and F(0) containing the membrane proton channel, linked together by a central stalk and a peripheral stalk. During catalysis, ATP synthesis in the catalytic domain of F(1) is coupled via a rotary mechanism of the central stalk subunits to proton translocation. Functionally, this protein is part of the stalk that links CF(0) to CF(1). It either transmits conformational changes from CF(0) to CF(1) or is implicated in proton conduction. This Geobacillus sp. (strain WCH70) protein is ATP synthase subunit delta.